We begin with the raw amino-acid sequence, 517 residues long: Ribonuclease Y (517 aa).

Residues 1–21 traverse the membrane as a helical segment; sequence MIEFLIGLIAAVVGILVGYLI. Residues 207 to 271 enclose the KH domain; that stretch reads LINVVNIKND…IAVRTVELLV (65 aa). An HD domain is found at 333 to 426; it reads ALIHSLEVAH…VCTADVLSAA (94 aa).

The protein belongs to the RNase Y family.

It is found in the cell membrane. In terms of biological role, endoribonuclease that initiates mRNA decay. This chain is Ribonuclease Y, found in Campylobacter hominis (strain ATCC BAA-381 / DSM 21671 / CCUG 45161 / LMG 19568 / NCTC 13146 / CH001A).